Reading from the N-terminus, the 481-residue chain is Leukocyte immunoglobulin-like receptor subfamily A member 6 (481 aa).

Residues 1 to 23 (MTPALTALLCLGLSLGPRTHVQA) form the signal peptide. In terms of domain architecture, Ig-like C2-type 1 spans 24–118 (GPLPKPTLWA…PSDPLELVVT (95 aa)). Residues 24 to 447 (GPLPKPTLWA…SHAKDYTVEN (424 aa)) lie on the Extracellular side of the membrane. Cysteines 49 and 98 form a disulfide. Asparagine 139 carries N-linked (GlcNAc...) asparagine glycosylation. 2 disulfide bridges follow: cysteine 144–cysteine 196 and cysteine 245–cysteine 296. Ig-like C2-type domains are found at residues 225 to 314 (PSLL…DPLN) and 323 to 408 (DRVS…HLLS). 2 N-linked (GlcNAc...) asparagine glycosylation sites follow: asparagine 301 and asparagine 340. Cysteines 345 and 396 form a disulfide. The interval 418 to 439 (VSGPSGGPSLPPTGPPSTPASH) is disordered. Pro residues predominate over residues 426-435 (SLPPTGPPST). Residues 448–468 (LIRMGMAGLVLVVLGILLFEA) form a helical membrane-spanning segment. The Cytoplasmic segment spans residues 469-481 (QHSQRSPQDAARR).

The protein localises to the membrane. In terms of biological role, may act as receptor for class I MHC antigens. The sequence is that of Leukocyte immunoglobulin-like receptor subfamily A member 6 (LILRA6) from Pan troglodytes (Chimpanzee).